The chain runs to 568 residues: Arginine--tRNA ligase (568 aa).

The 'HIGH' region signature appears at 129–139 (ANPTGPLHIGH).

It belongs to the class-I aminoacyl-tRNA synthetase family. In terms of assembly, monomer.

Its subcellular location is the cytoplasm. It carries out the reaction tRNA(Arg) + L-arginine + ATP = L-arginyl-tRNA(Arg) + AMP + diphosphate. This Wolbachia pipientis wMel protein is Arginine--tRNA ligase.